The chain runs to 417 residues: Multifunctional CCA protein (417 aa).

ATP is bound by residues glycine 8 and arginine 11. CTP contacts are provided by glycine 8 and arginine 11. Positions 21 and 23 each coordinate Mg(2+). The ATP site is built by arginine 91, arginine 137, and arginine 140. CTP is bound by residues arginine 91, arginine 137, and arginine 140. Residues serine 225–phenylalanine 326 enclose the HD domain.

It belongs to the tRNA nucleotidyltransferase/poly(A) polymerase family. Bacterial CCA-adding enzyme type 1 subfamily. As to quaternary structure, monomer. Can also form homodimers and oligomers. Mg(2+) is required as a cofactor. Ni(2+) serves as cofactor.

The catalysed reaction is a tRNA precursor + 2 CTP + ATP = a tRNA with a 3' CCA end + 3 diphosphate. It carries out the reaction a tRNA with a 3' CCA end + 2 CTP + ATP = a tRNA with a 3' CCACCA end + 3 diphosphate. Functionally, catalyzes the addition and repair of the essential 3'-terminal CCA sequence in tRNAs without using a nucleic acid template. Adds these three nucleotides in the order of C, C, and A to the tRNA nucleotide-73, using CTP and ATP as substrates and producing inorganic pyrophosphate. tRNA 3'-terminal CCA addition is required both for tRNA processing and repair. Also involved in tRNA surveillance by mediating tandem CCA addition to generate a CCACCA at the 3' terminus of unstable tRNAs. While stable tRNAs receive only 3'-terminal CCA, unstable tRNAs are marked with CCACCA and rapidly degraded. This chain is Multifunctional CCA protein, found in Neisseria meningitidis serogroup A / serotype 4A (strain DSM 15465 / Z2491).